The chain runs to 61 residues: Small ribosomal subunit protein uS14B (61 aa).

The Zn(2+) site is built by C24, C27, C40, and C43.

This sequence belongs to the universal ribosomal protein uS14 family. Zinc-binding uS14 subfamily. Part of the 30S ribosomal subunit. Contacts proteins S3 and S10. Zn(2+) serves as cofactor.

Its function is as follows. Binds 16S rRNA, required for the assembly of 30S particles and may also be responsible for determining the conformation of the 16S rRNA at the A site. This Staphylococcus epidermidis (strain ATCC 35984 / DSM 28319 / BCRC 17069 / CCUG 31568 / BM 3577 / RP62A) protein is Small ribosomal subunit protein uS14B.